We begin with the raw amino-acid sequence, 295 residues long: MHKLLLIITVFSTFNVAQASLTSIVASVNDKPITFNEFHARKKMIMVLNNVENLTSDQDKQLSDLAINSLIDESLLFQYAGDREIQQDEIDNAIKSIEDRNKMPHGSLLQYLKNKSVNPESFIFQIKSELIKMNILSSLSRSVQVSNKEIDVAILSSDQKDVEILMQVFRSKDGSNKAFTKMNYLKNRLKKCSDVKKTLYDKFATMQLITSKLSKLGGVKQTIVKDLIPDKASNVFEVNNKFEIILVCSKKILNVTVDENNYVVNFLTNKKISQKAQKIFKNMRKKAAITIMFPS.

Positions 1 to 19 (MHKLLLIITVFSTFNVAQA) are cleaved as a signal peptide.

This is an uncharacterized protein from Rickettsia typhi (strain ATCC VR-144 / Wilmington).